The following is a 454-amino-acid chain: GTPase Der (454 aa).

EngA-type G domains lie at 4-168 (PQVA…PEKD) and 178-352 (MKIA…KQAQ). GTP is bound by residues 10–17 (GRPNVGKS), 57–61 (DTGGM), 120–123 (NKAD), 184–191 (GRRNVGKS), 231–235 (DTPGL), and 296–299 (NKWD). The region spanning 353-437 (SRVSTGELNR…PIKLYMQQRS (85 aa)) is the KH-like domain.

It belongs to the TRAFAC class TrmE-Era-EngA-EngB-Septin-like GTPase superfamily. EngA (Der) GTPase family. Associates with the 50S ribosomal subunit.

Functionally, GTPase that plays an essential role in the late steps of ribosome biogenesis. In Rhodopirellula baltica (strain DSM 10527 / NCIMB 13988 / SH1), this protein is GTPase Der.